The following is a 400-amino-acid chain: Diphosphomevalonate decarboxylase (400 aa).

(R)-5-diphosphomevalonate-binding positions include 19–22 (YWGK), Arg-75, 154–159 (SGSACR), and Thr-210. The segment at 381–400 (DGPRTLGPEEALLSPDGLPK) is disordered.

It belongs to the diphosphomevalonate decarboxylase family.

The enzyme catalyses (R)-5-diphosphomevalonate + ATP = isopentenyl diphosphate + ADP + phosphate + CO2. The protein operates within isoprenoid biosynthesis; isopentenyl diphosphate biosynthesis via mevalonate pathway; isopentenyl diphosphate from (R)-mevalonate: step 3/3. Diphosphomevalonate decarboxylase; part of the second module of ergosterol biosynthesis pathway that includes the middle steps of the pathway. The second module involves the formation of farnesyl diphosphate, which is also an important intermediate in the biosynthesis of ubiquinone, dolichol, heme and prenylated proteins. This module also plays a key role in the biosynthesis of triterpenes such as ganoderic acids (GA), a group of highly oxygenated lanostane-type triterpenoids which are well recognized as a main group of unique bioactive compounds in the medicinal mushroom Ganoderma lucidum. Activity by the mevalonate kinase first converts mevalonate into 5-phosphomevalonate. 5-phosphomevalonate is then further converted to 5-diphosphomevalonate by the phosphomevalonate kinase. The diphosphomevalonate decarboxylase MVD then produces isopentenyl diphosphate. The isopentenyl-diphosphate delta-isomerase then catalyzes the 1,3-allylic rearrangement of the homoallylic substrate isopentenyl (IPP) to its highly electrophilic allylic isomer, dimethylallyl diphosphate (DMAPP). Finally the farnesyl diphosphate synthase FPS catalyzes the sequential condensation of isopentenyl pyrophosphate with dimethylallyl pyrophosphate, and then with the resultant geranylpyrophosphate to the ultimate product farnesyl pyrophosphate. The protein is Diphosphomevalonate decarboxylase of Ganoderma lucidum (Ling zhi medicinal fungus).